Here is a 524-residue protein sequence, read N- to C-terminus: Putative cysteine ligase BshC (524 aa).

The stretch at 437–457 forms a coiled coil; it reads AQALDRSARKINYQIEKMERK.

This sequence belongs to the BshC family.

The protein is Putative cysteine ligase BshC of Solibacter usitatus (strain Ellin6076).